Here is a 131-residue protein sequence, read N- to C-terminus: Fumarate reductase subunit C (131 aa).

Transmembrane regions (helical) follow at residues 30–50, 63–83, and 109–129; these read EGTAVPAVWFSIELIFGLFAL, FLQNPVIVIINLITLAAALLH, and IIKSLWAVTVVATIVILFVAL.

This sequence belongs to the FrdC family. As to quaternary structure, part of an enzyme complex containing four subunits: a flavoprotein (FrdA), an iron-sulfur protein (FrdB), and two hydrophobic anchor proteins (FrdC and FrdD).

It localises to the cell inner membrane. Its function is as follows. Two distinct, membrane-bound, FAD-containing enzymes are responsible for the catalysis of fumarate and succinate interconversion; fumarate reductase is used in anaerobic growth, and succinate dehydrogenase is used in aerobic growth. Anchors the catalytic components of the fumarate reductase complex to the cell inner membrane, binds quinones. The protein is Fumarate reductase subunit C of Shigella boydii serotype 18 (strain CDC 3083-94 / BS512).